The sequence spans 335 residues: 2,4-dienoyl-CoA reductase [(3E)-enoyl-CoA-producing], mitochondrial (335 aa).

The N-terminal 34 residues, 1-34 (MALLGRAFFAGVSRLPCDPGPQRFFSFGTKTLYQ), are a transit peptide targeting the mitochondrion. Residues Lys-42 and Lys-49 each carry the N6-acetyllysine; alternate modification. Lys-42 and Lys-49 each carry N6-succinyllysine; alternate. 66–71 (GGGTGL) lines the NADP(+) pocket. Thr-69 carries the post-translational modification Phosphothreonine. Lys-73 is modified (N6-succinyllysine). Arg-91 is an NADP(+) binding site. Arg-91 contacts substrate. Lys-97 and Lys-106 each carry N6-acetyllysine; alternate. Residues Lys-97 and Lys-106 each carry the N6-succinyllysine; alternate modification. Asp-117 contacts NADP(+). The substrate site is built by Arg-119 and Phe-149. Tyr-199 serves as the catalytic Proton acceptor. NADP(+)-binding positions include Lys-214 and 240–243 (PGPI). Lys-244 is modified (N6-acetyllysine; alternate). Lys-244 carries the post-translational modification N6-succinyllysine; alternate. Substrate is bound at residue Arg-251. An N6-acetyllysine; alternate modification is found at Lys-260. Lys-260 carries the N6-succinyllysine; alternate modification. At Lys-315 the chain carries N6-acetyllysine. Lys-319 carries the N6-acetyllysine; alternate modification. At Lys-319 the chain carries N6-succinyllysine; alternate.

It belongs to the short-chain dehydrogenases/reductases (SDR) family. 2,4-dienoyl-CoA reductase subfamily. Homotetramer.

The protein localises to the mitochondrion. The catalysed reaction is a (2E,4E)-dienoyl-CoA + NADPH + H(+) = a 4,5-saturated-(3E)-enoyl-CoA + NADP(+). It carries out the reaction a (2E,4Z)-dienoyl-CoA + NADPH + H(+) = a 4,5-saturated-(3E)-enoyl-CoA + NADP(+). It catalyses the reaction (2E,4E)-hexadienoyl-CoA + NADPH + H(+) = (3E)-hexenoyl-CoA + NADP(+). Functionally, auxiliary enzyme of beta-oxidation. It participates in the metabolism of unsaturated fatty enoyl-CoA esters having double bonds in both even- and odd-numbered positions in mitochondria. Catalyzes the NADP-dependent reduction of 2,4-dienoyl-CoA to yield trans-3-enoyl-CoA. In Mus musculus (Mouse), this protein is 2,4-dienoyl-CoA reductase [(3E)-enoyl-CoA-producing], mitochondrial (Decr1).